The sequence spans 988 residues: MGMRPNGALPRLTRRSRRLVAASLVIVVLLLIGPRLVDTYINWLWFGELGFRGVFTTVLLTRLALFLIVGTLVAAVVFAGFGLAYRARPVFVPAKGPGDALAQYRALILSRVRLFLIGVPILIGVLAGVVAQSYWMPVQLFLEGGDFGIKDPQFGLDLGFFAFDLPFYRFVLTYLFIAASIALIVNGLVHYIFGGIRLSGRSGTLSRPARIQLITFAGILVLLKVAAYWLDRYELLSHTRAGKPFTGAGYTDINAVLPAKLILLAIAVICAVAVFSALVLKDLRIPAIGLALLLLSSLVVGAGWPLIVEQFSVKPNAAQKESEYIARSIKATRDAYGLTDDVVTYRDYSGTASSPAGSQQLAKQVAADRSTIANIRVLDPNIISPAFTQLQQGKNFYAFPDALSIDRYQDKNGSLRDYVVAARELDPAKLRDNQRDWINRHTVYTHGNGFIAAPANTVRGVADKPDENGGYPEFLVNAVDDNGKVLSDGPAPLAQPRVYYGPIIASDTNDYAIVGKNGNDREYDYENNAGTKNSTYTGSGGVPVGGALARTVFGLKYAERNFLFSNVIGDNSKILFNRDPSRRVEAVAPWLTVDSGTYPAIVDKRLVWIVDGYTTLDNYPYSQQTSLSEATFDSQVGRTGGALPNQQVSYIRNSVKATVDAYDGTVTLYQQDEKDPVLKAWMKIFPGTVKPKADISDDLKRHLRYPEDLFKVQRTLLARYHVNDPVTFFSTSDFWQVPDDPNAPTGSQPPYYIVAKDITKNDNSASFQLTSALNRFQRDFLAAYVSASSDPETYGKITVLTVPGTVQGPKLVNNAITTDNQVSSHVGIIKNQNILKWGNLLTLPVANGGLLFVEPLYASPGQGDQSSYPRLIRVGMYYNGKVGYATTVRDALDMVFGPGAGATATAPAVEPGAMPPAPPGGQNVPVVPPVTPPPTGSAELSSAKAAALQEVQRAIGEVKEAQKSGDFARYGQALKGLDDAMTKFTQAR.

7 helical membrane passes run 19 to 39, 63 to 83, 114 to 134, 176 to 196, 211 to 231, 260 to 280, and 288 to 308; these read LVAA…LVDT, LALF…GFGL, LFLI…AQSY, FIAA…FGGI, IQLI…YWLD, KLIL…ALVL, and IGLA…PLIV.

It belongs to the UPF0182 family.

The protein resides in the cell membrane. The chain is UPF0182 protein MAB_3498c from Mycobacteroides abscessus (strain ATCC 19977 / DSM 44196 / CCUG 20993 / CIP 104536 / JCM 13569 / NCTC 13031 / TMC 1543 / L948) (Mycobacterium abscessus).